A 559-amino-acid polypeptide reads, in one-letter code: MMNLQWLIPLLPLLSALLVQLFAARLGKRVAHLSVALGTLTVIVAAYQLVAYIGTDASPSWHSLGTMWGSLYVDPLSSIMSLVVAGISLIVHVYSIRYMTEEPGYPRFFLLLDLMTASILLMVAAGDLVTLLIAWHMIGIMLYFLLGQNTESWPSQRYAFWTFITYRLGDLPLVLAAVLLYQTYGAIDFPTLFSRIAADPNATIMGLPTAITAAFLVALSAFAKSAQFPLHTWLPYTMEGPTPVSALMHAGIVNAGGFIINRFAPVFVHSDGVLHMLFVVGLITALVGSVLMLTQNDIKKSLGYSTMGQMGFMVMECGLGAFSLAVFHLIAHGLFKGTMFLGSGSMIHEARKHDGVPHNPLHTFLVERKSASLKLPWLFIGLATLVVPLFILVIAHWFVAPDFFEKQGAIVLLFFGWITGVQVLFATHHLDANNPIRMMMMILLSFTLIVVGYTFIGHAFENFLYPEEAFRNALYHAAGIDKLTFDGLVFLLALIVVAGWFSSYLASREKSVFGDRFGAVRLTLYSLISREFYVADLYDRMAHWLLDASKRFNVWMRWY.

Helical transmembrane passes span 4 to 24 (LQWL…LFAA), 33 to 53 (LSVA…VAYI), 76 to 96 (LSSI…VYSI), 106 to 126 (PRFF…VAAG), 173 to 193 (LVLA…PTLF), 202 to 222 (ATIM…LSAF), 240 to 260 (GPTP…GFII), 273 to 293 (VLHM…VLML), 310 to 330 (MGFM…FHLI), 375 to 395 (LPWL…LVIA), 408 to 428 (GAIV…FATH), 440 to 460 (MMIL…GHAF), and 487 to 507 (GLVF…YLAS).

The protein belongs to the inorganic carbon transporter (TC 9.A.2) DabB family. In terms of assembly, forms a complex with DabA1.

The protein resides in the cell inner membrane. Its function is as follows. Part of an energy-coupled inorganic carbon pump. This Halothiobacillus neapolitanus (strain ATCC 23641 / c2) (Thiobacillus neapolitanus) protein is Probable inorganic carbon transporter subunit DabB1.